We begin with the raw amino-acid sequence, 151 residues long: Ribosome maturation factor RimP (151 aa).

It belongs to the RimP family.

The protein resides in the cytoplasm. Its function is as follows. Required for maturation of 30S ribosomal subunits. This Shewanella sp. (strain MR-4) protein is Ribosome maturation factor RimP.